The primary structure comprises 907 residues: Androgen receptor (907 aa).

Residues 1–545 (MEVQLGLGRV…PIDYYFPPQK (545 aa)) are modulating. An interaction with ZNF318 region spans residues 1–574 (MEVQLGLGRV…GSCKVFFKRA (574 aa)). Disordered regions lie at residues 36 to 152 (NPGP…LSLL) and 200 to 231 (QQQE…YLGG). Positions 55 to 76 (QQQQQQQQQQETSPRQQQQQQQ) are enriched in low complexity. The residue at position 67 (S67) is a Phosphoserine; by CDK9. Position 81 is a phosphoserine (S81). Polar residues predominate over residues 123–134 (TSATGKGLQQQQ). The segment covering 200-224 (QQQEVVSEGSSSGRAREAAGASTSS) has biased composition (low complexity). Y228 carries the post-translational modification Phosphotyrosine; by CSK. S261 is subject to Phosphoserine. Residue Y272 is modified to Phosphotyrosine; by CSK and TNK2. Phosphotyrosine; by CSK is present on residues Y310, Y349, Y360, and Y365. The residue at position 366 (Y366) is a Phosphotyrosine; by CSK and TNK2. A Glycyl lysine isopeptide (Lys-Gly) (interchain with G-Cter in SUMO) cross-link involves residue K389. Y396 carries the phosphotyrosine; by CSK modification. A Glycyl lysine isopeptide (Lys-Gly) (interchain with G-Cter in SUMO) cross-link involves residue K508. Phosphotyrosine; by CSK occurs at positions 522 and 539. Positions 539 to 906 (YYFPPQKTCL…GKVKPIYFHT (368 aa)) are interaction with LPXN. The segment at residues 546–619 (TCLICGDEAS…AGMTLGARKL (74 aa)) is a DNA-binding region (nuclear receptor). 2 consecutive NR C4-type zinc fingers follow at residues 547-567 (CLIC…CGSC) and 583-607 (CASR…LRKC). An interaction with HIPK3 region spans residues 559–649 (YGALTCGSCK…TEEPTQKLTV (91 aa)). The interval 579 to 906 (QKYLCASRND…GKVKPIYFHT (328 aa)) is interaction with CCAR1. Residues 612–906 (MTLGARKLKK…GKVKPIYFHT (295 aa)) form an interaction with KAT7 region. Residue S638 is modified to Phosphoserine; by STK4/MST1. In terms of domain architecture, NR LBD spans 656–887 (ECQPIFLNVL…DFPEMMAEII (232 aa)). Residues N693 and R740 each coordinate 17beta-hydroxy-5alpha-androstan-3-one. Residues K833 and K835 each participate in a glycyl lysine isopeptide (Lys-Gly) (interchain with G-Cter in ubiquitin) cross-link. Position 865 (T865) interacts with 17beta-hydroxy-5alpha-androstan-3-one. Y903 carries the phosphotyrosine; by CSK modification.

The protein belongs to the nuclear hormone receptor family. NR3 subfamily. As to quaternary structure, binds DNA as a homodimer. Part of a ternary complex containing AR, EFCAB6/DJBP and PARK7. Interacts with HIPK3 and NR0B2 in the presence of androgen. The ligand binding domain interacts with KAT7/HBO1 in the presence of dihydrotestosterone. Interacts with EFCAB6/DJBP, PQBP1, RANBP9, RBAK, SPDEF, SRA1, TGFB1I1 and RREB1. Interacts with ZMIZ1/ZIMP10 and ZMIZ2/ZMIP7 which both enhance its transactivation activity. Interacts with SLC30A9 and RAD54L2/ARIP4. Interacts with MACROD1 (via macro domain). Interacts via the ligand-binding domain with LXXLL and FXXLF motifs from NCOA1, NCOA2, NCOA3 and MAGEA11. Interacts (via nuclear receptor DNA binding domain and nuclear receptor ligand binding domain) with NCOA4. The AR N-terminal poly-Gln region binds Ran resulting in enhancement of AR-mediated transactivation. Ran-binding decreases as the poly-Gln length increases. Interacts with HIP1 (via coiled coil domain). Interacts (via ligand-binding domain) with TRIM68. Interacts with TNK2. Interacts with USP26. Interacts with RNF6. Interacts (regulated by RNF6 probably through polyubiquitination) with RNF14; regulates AR transcriptional activity. Interacts with PRMT2 and TRIM24. Interacts with RACK1. Interacts with RANBP10; this interaction enhances dihydrotestosterone-induced AR transcriptional activity. Interacts with PRPF6 in a hormone-independent way; this interaction enhances dihydrotestosterone-induced AR transcriptional activity. Interacts with STK4/MST1. Interacts with ZIPK/DAPK3. Interacts with LPXN. Interacts with MAK. Part of a complex containing AR, MAK and NCOA3. Interacts with CRY1. Interacts with CCAR1 and GATA2. Interacts with ZNF318. Interacts with BUD31. Interacts with ARID4A. Interacts with ARID4B. Interacts (via NR LBD domain) with ZBTB7A; the interaction is direct and androgen-dependent. Interacts with NCOR1. Interacts with NCOR2. Interacts witH CRY2 in a ligand-dependent manner. Post-translationally, phosphorylated in prostate cancer cells in response to several growth factors including EGF. Phosphorylation is induced by c-Src kinase (CSK). Tyr-522 is one of the major phosphorylation sites and an increase in phosphorylation and Src kinase activity is associated with prostate cancer progression. Phosphorylation by TNK2 enhances the DNA-binding and transcriptional activity. Phosphorylation at Ser-67 by CDK9 regulates AR promoter selectivity and cell growth. Sumoylated on Lys-389 (major) and Lys-508. Ubiquitinated. Deubiquitinated by USP26. 'Lys-6' and 'Lys-27'-linked polyubiquitination by RNF6 modulates AR transcriptional activity and specificity. In terms of processing, palmitoylated by ZDHHC7 and ZDHHC21. Palmitoylation is required for plasma membrane targeting and for rapid intracellular signaling via ERK and AKT kinases and cAMP generation.

It localises to the nucleus. The protein resides in the cytoplasm. Functionally, steroid hormone receptors are ligand-activated transcription factors that regulate eukaryotic gene expression and affect cellular proliferation and differentiation in target tissues. Transcription factor activity is modulated by bound coactivator and corepressor proteins like ZBTB7A that recruits NCOR1 and NCOR2 to the androgen response elements/ARE on target genes, negatively regulating androgen receptor signaling and androgen-induced cell proliferation. Transcription activation is also down-regulated by NR0B2. Activated, but not phosphorylated, by HIPK3 and ZIPK/DAPK3. In Canis lupus familiaris (Dog), this protein is Androgen receptor (AR).